The following is a 380-amino-acid chain: Cytochrome b (380 aa).

Transmembrane regions (helical) follow at residues 33–53 (SGSL…FLAM), 77–98 (WLIR…YLHV), 113–133 (WNIG…GYVL), and 178–198 (FFAF…IHLL). Heme b contacts are provided by histidine 83 and histidine 97. Residues histidine 182 and histidine 196 each contribute to the heme b site. Residue histidine 201 coordinates a ubiquinone. 4 helical membrane-spanning segments follow: residues 226-246 (YKDL…ALFS), 288-308 (LGGV…PILH), 320-340 (LSQI…WIGG), and 347-367 (FVLI…IALP).

It belongs to the cytochrome b family. The cytochrome bc1 complex contains 3 respiratory subunits (MT-CYB, CYC1 and UQCRFS1), 2 core proteins (UQCRC1 and UQCRC2) and probably 6 low-molecular weight proteins. The cofactor is heme b.

The protein resides in the mitochondrion inner membrane. Functionally, component of the ubiquinol-cytochrome c reductase complex (complex III or cytochrome b-c1 complex) that is part of the mitochondrial respiratory chain. The b-c1 complex mediates electron transfer from ubiquinol to cytochrome c. Contributes to the generation of a proton gradient across the mitochondrial membrane that is then used for ATP synthesis. This is Cytochrome b (mt-cyb) from Polyodon spathula (North American paddlefish).